Here is a 1289-residue protein sequence, read N- to C-terminus: DNA-directed RNA polymerase subunit beta (1289 aa).

This sequence belongs to the RNA polymerase beta chain family. The RNAP catalytic core consists of 2 alpha, 1 beta, 1 beta' and 1 omega subunit. When a sigma factor is associated with the core the holoenzyme is formed, which can initiate transcription.

It catalyses the reaction RNA(n) + a ribonucleoside 5'-triphosphate = RNA(n+1) + diphosphate. In terms of biological role, DNA-dependent RNA polymerase catalyzes the transcription of DNA into RNA using the four ribonucleoside triphosphates as substrates. This chain is DNA-directed RNA polymerase subunit beta, found in Methylacidiphilum infernorum (isolate V4) (Methylokorus infernorum (strain V4)).